A 121-amino-acid chain; its full sequence is UPF0102 protein Mvan_2202 (121 aa).

It belongs to the UPF0102 family.

The polypeptide is UPF0102 protein Mvan_2202 (Mycolicibacterium vanbaalenii (strain DSM 7251 / JCM 13017 / BCRC 16820 / KCTC 9966 / NRRL B-24157 / PYR-1) (Mycobacterium vanbaalenii)).